The following is a 465-amino-acid chain: Citrate synthase-like protein (465 aa).

The tract at residues 13-40 is disordered; that stretch reads HISDMVDSTKMNGNQSQDTAGRADTPVS. Polar residues predominate over residues 21–31; that stretch reads TKMNGNQSQDT. Active-site residues include histidine 357 and aspartate 413.

This sequence belongs to the citrate synthase family.

It participates in secondary metabolite biosynthesis. Citrate synthase-like protein; part of the gene cluster that mediates the biosynthesis of squalestatin S1 (SQS1, also known as zaragozic acid A), a heavily oxidized fungal polyketide that offers potent cholesterol lowering activity by targeting squalene synthase (SS). SQS1 is composed of a 2,8-dioxobicyclic[3.2.1]octane-3,4,5-tricarboxyclic acid core that is connected to two lipophilic polyketide arms. These initial steps feature the priming of an unusual benzoic acid starter unit onto the highly reducing polyketide synthase pks2, followed by oxaloacetate extension and product release to generate a tricarboxylic acid containing product. The phenylalanine ammonia lyase (PAL) M7 and the acyl-CoA ligase M9 are involved in transforming phenylalanine into benzoyl-CoA. The citrate synthase-like protein R3 is involved in connecting the C-alpha-carbons of the hexaketide chain and oxaloacetate to afford the tricarboxylic acid unit. The potential hydrolytic enzymes, M8 and M10, are in close proximity to pks2 and may participate in product release. On the other side, the tetraketide arm is synthesized by a the squalestatin tetraketide synthase pks1 and enzymatically esterified to the core in the last biosynthetic step, by the acetyltransferase M4. The biosynthesis of the tetraketide must involve 3 rounds of chain extension. After the first and second rounds methyl-transfer occurs, and in all rounds of extension the ketoreductase and dehydratase are active. The enoyl reductase and C-MeT of pks1 are not active in the final round of extension. The acetyltransferase M4 appears to have a broad substrate selectivity for its acyl CoA substrate, allowing the in vitro synthesis of novel squalestatins. The biosynthesis of SQS1 requires several oxidative steps likely performed by oxidoreductases M1, R1 and R2. Finally, in support of the identification of the cluster as being responsible for SQS1 production, the cluster contains a gene encoding a putative squalene synthase (SS) R6, suggesting a likely mechanism for self-resistance. The sequence is that of Citrate synthase-like protein from Phoma sp. (strain ATCC 20986 / MF5453).